We begin with the raw amino-acid sequence, 388 residues long: Protein-glutamate methylesterase/protein-glutamine glutaminase (388 aa).

A Response regulatory domain is found at Arg20–His138. Asp71 bears the 4-aspartylphosphate mark. The CheB-type methylesterase domain occupies Pro193 to Asp386. Catalysis depends on residues Ser204, His232, and Asp328.

The protein belongs to the CheB family. Phosphorylated by CheA. Phosphorylation of the N-terminal regulatory domain activates the methylesterase activity.

It localises to the cytoplasm. It catalyses the reaction [protein]-L-glutamate 5-O-methyl ester + H2O = L-glutamyl-[protein] + methanol + H(+). It carries out the reaction L-glutaminyl-[protein] + H2O = L-glutamyl-[protein] + NH4(+). Involved in chemotaxis. Part of a chemotaxis signal transduction system that modulates chemotaxis in response to various stimuli. Catalyzes the demethylation of specific methylglutamate residues introduced into the chemoreceptors (methyl-accepting chemotaxis proteins or MCP) by CheR. Also mediates the irreversible deamidation of specific glutamine residues to glutamic acid. The sequence is that of Protein-glutamate methylesterase/protein-glutamine glutaminase from Rhodopseudomonas palustris (strain HaA2).